The sequence spans 519 residues: Chromobox protein homolog 2 (519 aa).

The Chromo domain maps to phenylalanine 12 to arginine 70. Over residues lysine 60 to asparagine 69 the composition is skewed to basic and acidic residues. The segment at lysine 60 to proline 180 is disordered. Basic residues predominate over residues arginine 70–threonine 84. The a.T hook DNA-binding region spans arginine 75 to serine 87. Over residues lysine 103–serine 119 the composition is skewed to low complexity. The segment covering leucine 129–histidine 141 has biased composition (basic and acidic residues). Residues lysine 147 and lysine 154 each participate in a glycyl lysine isopeptide (Lys-Gly) (interchain with G-Cter in SUMO2) cross-link. The short motif at lysine 164–proline 169 is the Nuclear localization signal element. Arginine 248 is modified (asymmetric dimethylarginine; alternate). Arginine 248 is modified (omega-N-methylarginine; alternate). Disordered stretches follow at residues glutamine 295–threonine 336 and alanine 367–proline 464. Serine 303 bears the Phosphoserine mark. 2 stretches are compositionally biased toward polar residues: residues glutamine 321–threonine 336 and threonine 384–asparagine 395. The span at serine 453–proline 464 shows a compositional bias: low complexity.

As to quaternary structure, component of a PRC1-like complex. The composition of the PRC1 complex may differ between the PRC1 complex in pluripotent embryonic stem cells containing RNF2, CBX7 and PCGF2, and the PRC1 complex in differentiating cells containing RNF2, CBX2, CBX4 and BMI1. Interacts with RING1/RNF2. Interacts (via chromodomain) with histone H3K9Me3 and H3K27me3. May interact with H3C15 and H3C1. Expressed in embryoid bodies.

The protein localises to the nucleus speckle. The protein resides in the chromosome. Component of a Polycomb group (PcG) multiprotein PRC1-like complex, a complex class required to maintain the transcriptionally repressive state of many genes, including Hox genes, throughout development. PcG PRC1 complex acts via chromatin remodeling and modification of histones; it mediates monoubiquitination of histone H2A 'Lys-119', rendering chromatin heritably changed in its expressibility. Binds to histone H3 trimethylated at 'Lys-9' (H3K9me3) or at 'Lys-27' (H3K27me3). Plays a role in the lineage differentiation of the germ layers in embryonic development. Involved in sexual development, acting as activator of NR5A1 expression. This is Chromobox protein homolog 2 (Cbx2) from Mus musculus (Mouse).